The primary structure comprises 219 residues: Large ribosomal subunit protein bL25 (219 aa).

The tract at residues 194–219 (SSTELEETPEVPASAVPTTDQGESAE) is disordered. Residues 209 to 219 (VPTTDQGESAE) are compositionally biased toward polar residues.

This sequence belongs to the bacterial ribosomal protein bL25 family. CTC subfamily. As to quaternary structure, part of the 50S ribosomal subunit; part of the 5S rRNA/L5/L18/L25 subcomplex. Contacts the 5S rRNA. Binds to the 5S rRNA independently of L5 and L18.

Its function is as follows. This is one of the proteins that binds to the 5S RNA in the ribosome where it forms part of the central protuberance. In Legionella pneumophila (strain Paris), this protein is Large ribosomal subunit protein bL25.